A 440-amino-acid polypeptide reads, in one-letter code: Alpha-ionylideneethane synthase aba3 (440 aa).

This sequence belongs to the alpha-ionylideneethane synthase family.

Its pathway is hormone biosynthesis. Alpha-ionylideneethane synthase; part of the gene cluster that mediates the biosynthesis of abscisic acid (ABA), a phytohormone that acts antagonistically toward salicylic acid (SA), jasmonic acid (JA) and ethylene (ETH) signaling, to impede plant defense responses. The first step of the pathway catalyzes the reaction from farnesyl diphosphate to alpha-ionylideneethane performed by the alpha-ionylideneethane synthase aba3 via a three-step reaction mechanism involving 2 neutral intermediates, beta-farnesene and allofarnesene. The cytochrome P450 monooxygenase aba1 might then be involved in the conversion of alpha-ionylideneethane to alpha-ionylideneacetic acid. Alpha-ionylideneacetic acid is further converted to abscisic acid in 2 steps involving the cytochrome P450 monooxygenase aba2 and the short-chain dehydrogenase/reductase aba4, via the intermediates 1'-deoxy-ABA or 1',4'-trans-diol-ABA, depending on the order of action of these 2 enzymes. Aba2 is responsible for the hydroxylation of carbon atom C-1' and aba4 might be involved in the oxidation of the C-4' carbon atom. This chain is Alpha-ionylideneethane synthase aba3, found in Botryotinia fuckeliana (strain B05.10) (Noble rot fungus).